The primary structure comprises 492 residues: Ammonium transporter MEP1 (492 aa).

At 1–18 the chain is on the extracellular side; the sequence is MESRTTGPLTTETYDGPT. A helical transmembrane segment spans residues 19-39; it reads VAFMILGAALVFFMVPGLGFL. The Cytoplasmic portion of the chain corresponds to 40 to 49; the sequence is YSGLARRKSA. Residues 50–70 traverse the membrane as a helical segment; that stretch reads LALIWVVLMATLVGILQWYFW. Residues 71–109 lie on the Extracellular side of the membrane; it reads GYSLAFSKSAPNNKFIGNLDSFGFRNVYGKKFDEDAYPE. Residues 110–130 form a helical membrane-spanning segment; that stretch reads LAYATFQMMFSCVNLSIIAGA. Topologically, residues 131 to 140 are cytoplasmic; that stretch reads TAERGRLLPH. The helical transmembrane segment at 141-161 threads the bilayer; that stretch reads MVFLFILATIGYCPVTYWIWS. The Extracellular segment spans residues 162-174; it reads PGGWAYQWGVLDW. Residues 175 to 195 form a helical membrane-spanning segment; sequence AGGGNIEILSAVSGFVYSWFL. Residues 196-210 lie on the Cytoplasmic side of the membrane; sequence GKRNEKLLINFRPHN. A helical transmembrane segment spans residues 211–231; that stretch reads VSLVTLGTSILWFGWLLFNSA. The Extracellular segment spans residues 232–240; it reads SSLSPNLRS. A helical membrane pass occupies residues 241–261; that stretch reads VYAFMNTCLSAITGGMTWCLL. The Cytoplasmic portion of the chain corresponds to 262-268; that stretch reads DYRSEKK. A helical transmembrane segment spans residues 269–289; sequence WSTVGLCSGIISGLVAATPSS. Position 290 (glycine 290) is a topological domain, extracellular. A helical transmembrane segment spans residues 291–311; sequence CITLYGSLIQGIVAGVVCNFA. Residues 312 to 331 lie on the Cytoplasmic side of the membrane; it reads TKLKYYAKVDDAMDILAEHG. A helical membrane pass occupies residues 332 to 352; the sequence is VAGVIGLIFNALFGADWVIGM. Topologically, residues 353–373 are extracellular; the sequence is DGTTEHEGGWVTHNYKQMYKQ. Residues 374–394 form a helical membrane-spanning segment; it reads IAYIAASIGYTAAVTAIICFV. Topologically, residues 395-492 are cytoplasmic; sequence LGYIPGMRLR…PIHQEDPANR (98 aa). Phosphoserine is present on residues serine 442 and serine 445. Positions 455–492 are disordered; it reads HLAAERSSSGTNSSSDGNGEMIQSEKILPIHQEDPANR. A compositionally biased stretch (low complexity) spans 461–473; the sequence is SSSGTNSSSDGNG.

Belongs to the ammonia transporter channel (TC 1.A.11.2) family.

The protein resides in the membrane. Transporter for ammonium (both charged and uncharged NH3 and NH4) to use as a nitrogen source. Can also transport methylamine. The affinity of MEP1 is about twenty times lower than that of MEP2. MEP3 has the lowest affinity. The polypeptide is Ammonium transporter MEP1 (MEP1) (Saccharomyces cerevisiae (strain ATCC 204508 / S288c) (Baker's yeast)).